The primary structure comprises 126 residues: Aspartate 1-decarboxylase (126 aa).

The active-site Schiff-base intermediate with substrate; via pyruvic acid is Ser25. Ser25 carries the pyruvic acid (Ser) modification. Thr57 lines the substrate pocket. The active-site Proton donor is the Tyr58. 73 to 75 is a substrate binding site; the sequence is GGA.

The protein belongs to the PanD family. Heterooctamer of four alpha and four beta subunits. The cofactor is pyruvate. Post-translationally, is synthesized initially as an inactive proenzyme, which is activated by self-cleavage at a specific serine bond to produce a beta-subunit with a hydroxyl group at its C-terminus and an alpha-subunit with a pyruvoyl group at its N-terminus.

Its subcellular location is the cytoplasm. The enzyme catalyses L-aspartate + H(+) = beta-alanine + CO2. It functions in the pathway cofactor biosynthesis; (R)-pantothenate biosynthesis; beta-alanine from L-aspartate: step 1/1. Catalyzes the pyruvoyl-dependent decarboxylation of aspartate to produce beta-alanine. In Acinetobacter baylyi (strain ATCC 33305 / BD413 / ADP1), this protein is Aspartate 1-decarboxylase.